A 451-amino-acid polypeptide reads, in one-letter code: UDP-N-acetylmuramoylalanine--D-glutamate ligase (451 aa).

120–126 (GSNGKTT) provides a ligand contact to ATP.

Belongs to the MurCDEF family.

The protein resides in the cytoplasm. The catalysed reaction is UDP-N-acetyl-alpha-D-muramoyl-L-alanine + D-glutamate + ATP = UDP-N-acetyl-alpha-D-muramoyl-L-alanyl-D-glutamate + ADP + phosphate + H(+). Its pathway is cell wall biogenesis; peptidoglycan biosynthesis. Functionally, cell wall formation. Catalyzes the addition of glutamate to the nucleotide precursor UDP-N-acetylmuramoyl-L-alanine (UMA). This chain is UDP-N-acetylmuramoylalanine--D-glutamate ligase, found in Bacillus velezensis (strain DSM 23117 / BGSC 10A6 / LMG 26770 / FZB42) (Bacillus amyloliquefaciens subsp. plantarum).